We begin with the raw amino-acid sequence, 389 residues long: Sterol methyltransferase-like 2 (389 aa).

The helical transmembrane segment at 25 to 45 threads the bilayer; that stretch reads LSWKGAVGLVAATGIGYVLII.

The protein belongs to the class I-like SAM-binding methyltransferase superfamily. Erg6/SMT family.

Its subcellular location is the microsome membrane. Its function is as follows. Unable to convert squalene, botryococcene, cycloartenol, zymosterol or lanosterol to mono-, di-, tri- or tetramethylated derivatives. The sequence is that of Sterol methyltransferase-like 2 (SMT-2) from Botryococcus braunii (Green alga).